The sequence spans 216 residues: Uracil phosphoribosyltransferase (216 aa).

5-phospho-alpha-D-ribose 1-diphosphate contacts are provided by residues arginine 85, arginine 110, and 135–143 (DPMVATGYS). Residues isoleucine 200 and 205–207 (GDA) each bind uracil. Aspartate 206 contacts 5-phospho-alpha-D-ribose 1-diphosphate.

The protein belongs to the UPRTase family. Mg(2+) is required as a cofactor.

The enzyme catalyses UMP + diphosphate = 5-phospho-alpha-D-ribose 1-diphosphate + uracil. It functions in the pathway pyrimidine metabolism; UMP biosynthesis via salvage pathway; UMP from uracil: step 1/1. Its activity is regulated as follows. Allosterically activated by GTP. Functionally, catalyzes the conversion of uracil and 5-phospho-alpha-D-ribose 1-diphosphate (PRPP) to UMP and diphosphate. This is Uracil phosphoribosyltransferase from Burkholderia ambifaria (strain ATCC BAA-244 / DSM 16087 / CCUG 44356 / LMG 19182 / AMMD) (Burkholderia cepacia (strain AMMD)).